The sequence spans 65 residues: Large ribosomal subunit protein bL35 (65 aa).

The interval 1 to 51 (MPKMKTNRAAAKRFKKTANGGLKSANAYTSHRFHGKTKKQRRQLRGTDMMD) is disordered. Over residues 31-44 (HRFHGKTKKQRRQL) the composition is skewed to basic residues.

This sequence belongs to the bacterial ribosomal protein bL35 family.

In Pediococcus pentosaceus (strain ATCC 25745 / CCUG 21536 / LMG 10740 / 183-1w), this protein is Large ribosomal subunit protein bL35.